Consider the following 98-residue polypeptide: MEIKPLGDRVLLKPMEEEEKTKSGIVIPDTAKEKPQKGKVLAVGTGRTLDNGTRVPLEVQVGDIVVFSKYAGTEVKVDGEEYLIVSERDILAVVGHEN.

The protein belongs to the GroES chaperonin family. In terms of assembly, heptamer of 7 subunits arranged in a ring. Interacts with the chaperonin GroEL.

Its subcellular location is the cytoplasm. Its function is as follows. Together with the chaperonin GroEL, plays an essential role in assisting protein folding. The GroEL-GroES system forms a nano-cage that allows encapsulation of the non-native substrate proteins and provides a physical environment optimized to promote and accelerate protein folding. GroES binds to the apical surface of the GroEL ring, thereby capping the opening of the GroEL channel. This chain is Co-chaperonin GroES, found in Coprothermobacter proteolyticus (strain ATCC 35245 / DSM 5265 / OCM 4 / BT).